Here is a 173-residue protein sequence, read N- to C-terminus: Bifunctional protein PyrR (173 aa).

Positions 93-105 (IILIDDVLYTGRT) match the PRPP-binding motif.

The protein belongs to the purine/pyrimidine phosphoribosyltransferase family. PyrR subfamily. In terms of assembly, homodimer and homohexamer; in equilibrium.

The enzyme catalyses UMP + diphosphate = 5-phospho-alpha-D-ribose 1-diphosphate + uracil. Functionally, regulates transcriptional attenuation of the pyrimidine nucleotide (pyr) operon by binding in a uridine-dependent manner to specific sites on pyr mRNA. This disrupts an antiterminator hairpin in the RNA and favors formation of a downstream transcription terminator, leading to a reduced expression of downstream genes. Its function is as follows. Also displays a weak uracil phosphoribosyltransferase activity which is not physiologically significant. In Streptococcus agalactiae serotype Ia (strain ATCC 27591 / A909 / CDC SS700), this protein is Bifunctional protein PyrR.